The sequence spans 248 residues: Methionine aminopeptidase (248 aa).

Position 77 (histidine 77) interacts with substrate. Aspartate 94, aspartate 105, and histidine 169 together coordinate a divalent metal cation. Histidine 176 contacts substrate. Glutamate 202 and glutamate 233 together coordinate a divalent metal cation.

Belongs to the peptidase M24A family. Methionine aminopeptidase type 1 subfamily. Monomer. The cofactor is Co(2+). Zn(2+) serves as cofactor. Requires Mn(2+) as cofactor. Fe(2+) is required as a cofactor.

The enzyme catalyses Release of N-terminal amino acids, preferentially methionine, from peptides and arylamides.. Its function is as follows. Removes the N-terminal methionine from nascent proteins. The N-terminal methionine is often cleaved when the second residue in the primary sequence is small and uncharged (Met-Ala-, Cys, Gly, Pro, Ser, Thr, or Val). Requires deformylation of the N(alpha)-formylated initiator methionine before it can be hydrolyzed. This chain is Methionine aminopeptidase, found in Mycoplasma genitalium (strain ATCC 33530 / DSM 19775 / NCTC 10195 / G37) (Mycoplasmoides genitalium).